A 196-amino-acid polypeptide reads, in one-letter code: Probable malonic semialdehyde reductase RutE (196 aa).

The protein belongs to the nitroreductase family. HadB/RutE subfamily. The cofactor is FMN.

It catalyses the reaction 3-hydroxypropanoate + NADP(+) = 3-oxopropanoate + NADPH + H(+). In terms of biological role, may reduce toxic product malonic semialdehyde to 3-hydroxypropionic acid, which is excreted. This Escherichia coli O7:K1 (strain IAI39 / ExPEC) protein is Probable malonic semialdehyde reductase RutE.